The following is a 265-amino-acid chain: Anamorsin homolog (265 aa).

An N-terminal SAM-like domain region spans residues 1–147 (MDAAKMYGAV…WKIGSSFALK (147 aa)). The tract at residues 147–176 (KKVVKSSPKVQIDFDSDLIDENSLLSEEDL) is linker. [2Fe-2S] cluster is bound by residues cysteine 186, cysteine 195, cysteine 198, and cysteine 200. The tract at residues 186 to 200 (CEIGPTRKACKNCSC) is fe-S binding site A. Residues cysteine 226, cysteine 229, cysteine 237, and cysteine 240 each coordinate [4Fe-4S] cluster. 2 short sequence motifs (cx2C motif) span residues 226–229 (CGSC) and 237–240 (CSTC). The fe-S binding site B stretch occupies residues 226-240 (CGSCGLGDAFRCSTC).

Belongs to the anamorsin family. As to quaternary structure, monomer. [2Fe-2S] cluster is required as a cofactor. [4Fe-4S] cluster serves as cofactor.

The protein localises to the cytoplasm. It is found in the mitochondrion intermembrane space. In terms of biological role, component of the cytosolic iron-sulfur (Fe-S) protein assembly (CIA) machinery. Required for the maturation of extramitochondrial Fe-S proteins. Part of an electron transfer chain functioning in an early step of cytosolic Fe-S biogenesis, facilitating the de novo assembly of a [4Fe-4S] cluster on the cytosolic Fe-S scaffold complex. Electrons are transferred from NADPH via a FAD- and FMN-containing diflavin oxidoreductase. Together with the diflavin oxidoreductase, also required for the assembly of the diferric tyrosyl radical cofactor of ribonucleotide reductase (RNR), probably by providing electrons for reduction during radical cofactor maturation in the catalytic small subunit. This Medicago truncatula (Barrel medic) protein is Anamorsin homolog.